Consider the following 163-residue polypeptide: Photosystem II extrinsic protein V (163 aa).

The N-terminal stretch at 1 to 26 is a signal peptide; it reads MFKKSYQFFALVLFSIFNVLVTSASA. Heme c-binding residues include C63, C66, H67, and H118.

This sequence belongs to the cytochrome c family. PsbV subfamily. PSII is composed of 1 copy each of membrane proteins PsbA, PsbB, PsbC, PsbD, PsbE, PsbF, PsbH, PsbI, PsbJ, PsbK, PsbL, PsbM, PsbT, PsbY, PsbZ, Psb30/Ycf12, at least 3 peripheral proteins of the oxygen-evolving complex and a large number of cofactors. It forms dimeric complexes. Requires heme c as cofactor.

It localises to the plastid. Its subcellular location is the chloroplast thylakoid membrane. Its function is as follows. One of the extrinsic, lumenal subunits of photosystem II (PSII). PSII is a light-driven water plastoquinone oxidoreductase, using light energy to abstract electrons from H(2)O, generating a proton gradient subsequently used for ATP formation. The extrinsic proteins stabilize the structure of photosystem II oxygen-evolving complex (OEC), the ion environment of oxygen evolution and protect the OEC against heat-induced inactivation. The polypeptide is Photosystem II extrinsic protein V (Trieres chinensis (Marine centric diatom)).